Consider the following 1544-residue polypeptide: MKLYKLNTHTRGCNKSYDADLVMNLKDHPNANVGDVVEIYAPDEENGTHLLLQITEFNGSCGRDVISIESGIANAFKMRPYSNVVMRIVKPADVALDSIEITFKDQYMGRSEMWRLKTYLTDTCVYVNKKIDYNDMQIRCQVYEMWSQGERVASGVITEDTKIVFRSSTSMVYLFLQMSSEMWDFDIHGDLYFEKAVNGFLTELFQKWRKLSCNHEVTIVLFSRTFYAAKSLDEFPEHMRDCLQQDYKGRFYEDFYRVAIQNERCDDWCTVLGQLRKLFTSYQATVLRYHERENMKIPPATNSSATQGNFLEVLNISLNTFEKHYLDRTFDRTGQLSVVITPGVGVFSVDRELTNITKQRIIDNGVGSDLVCVGEQPLHAVPLLKFHNKDTTLTSADDYSLPHWINLSFYSTNKKIVYSSFIPRIKLPLFGSQLTLHDGVGDGEGEENERHFLSCNQSEYKHNSLFDYDAYDEQIFQPLPAQSTCSLQRVVRAKKTSVPSLETYAYRNNDWENLTPTQIPAMRRKMSDPDIHHGTSAMLAALQPDTTNLSESLASEKNSRRTIVSIAPIVRPGRALINPFDPSQVTIKLTSNRRRWTHIFPKGPTGVLIQQHHYQAVPAKPTQAGQQRPLQQTQSNNNNDQEDYGCENGEQYDRVSSHSLLNKSDSSQSFVMGDEPIDFFKRRQNSPMNPQPANVPNLTATQAKSYLWGATGEQEWTPAITTVKHLRPIVEGEHHHLGSLEALRALDPPPDAEAGGGRGKIIIGVDWKSLTIPACLPITTDYFPDKRSLNNDYVISDYTLLPDDVNHDYAQSRAVYRKPLSTEEVCKEIVSQRLAQGFQLIVVDEKPPTASGCSSGSAVQPVKLSRETNKEYLLSIGRIFHKISLSGSVITVTGYRPRHPYPPINVDYRYRFHAPQHETYEISGVNFTTEKLENFNWNHMDLYICTRGDVDYPLMESLKYWRYRMYLLPRENIVSKIASCQRCDIFPDVTADNTREQVEDFVRLIEAVSKLKRQYARKARYLASLLQDSPIAHITKRRHSTSIISRPQPNQGLTNSPFRERVGSNRLPEKRPSINVRPKLENGRIPRIFPATDAAAAAGVAARDDQDDGFPVDIKFSPNATLPEIFEAMKHPVNGVGFFSQTQSLPSCTFVSYDALMWLKTRLNNGRHPLDLLEAMRKERMICHASGDWKKPVVPGFVFYYVVQQDKNAKDYAPPLDDYSAFVNEWLEIEFQGCSFLWHDEPVTTPVPNFLRDSPAPQSWTETSSNKRVYRQSHLEIDVNQKSDRMEWGHVKHHTVLQPRFAFEIVVEWVTSSGPIVADLIGGWMRKANQFNFLVSVPADPMAEPFTKKSDPLRGPIFIPLCTTFLPNGAALFDEFPEESRSDRMLFFQEAILGKFGFLPCVLEKKYSVGKDLPKEYQYVHCTGNMFALIRCATNNYQVESPILKEANVTRCVYGHTNNTNVPKKVGFLWAWNHMIPNKKWKAQTINNSADGELFQLKMLKDFREFCSNSDQRLSTFWTQSQELKRRAQKFEFNNNNTEENKMK.

2 disordered regions span residues 615-649 (QAVP…CENG) and 1037-1072 (RRHS…EKRP). Polar residues-rich tracts occupy residues 623 to 639 (QAGQ…NNNN) and 1041 to 1057 (TSII…TNSP). Over residues 1058–1072 (FRERVGSNRLPEKRP) the composition is skewed to basic and acidic residues.

Belongs to the IML1 family. In terms of assembly, component of the GATOR complex consisting of mio, Nup44A/Seh1, Im11, Nplr3, Nplr2, Wdr24, Wdr59 and Sec13. Within the GATOR complex, probable component of the GATOR1 subcomplex which is likely composed of Iml1, Nplr2 and Nplr3.

Its function is as follows. An essential component of the GATOR subcomplex GATOR1 which functions as an inhibitor of the amino acid-sensing branch of the TORC1 signaling pathway. The two GATOR subcomplexes, GATOR1 and GATOR2, regulate the TORC1 pathway in order to mediate metabolic homeostasis, female gametogenesis and the response to amino acid limitation and complete starvation. The function of GATOR1 in negatively regulating the TORC1 pathway is essential for maintaining baseline levels of TORC1 activity under nutrient rich conditions, and for promoting survival during amino acid or complete starvation by inhibiting TORC1-dependent cell growth and promoting catabolic metabolism and autophagy. GATOR1 and GATOR2 act at different stages of oogenesis to regulate TORC1 in order to control meiotic entry and promote oocyte growth and development. After exactly four mitotic cyst divisions, the GATOR1 complex members (Iml1, Nprl2 and Nprl3) down-regulate TORC1 to slow cellular metabolism and promote the mitotic/meiotic transition. At later stages of oogenesis, the mio and Nup44A components of the GATOR2 complex inhibit GATOR1 and thus activate TORC1 to promote meiotic progression, and drive oocyte growth and development. The sequence is that of GATOR complex protein Iml1 from Drosophila melanogaster (Fruit fly).